A 123-amino-acid chain; its full sequence is Thioredoxin domain-containing protein 17 (123 aa).

Residues 41–123 (SWCPDCVTAE…DLVRMMFTED (83 aa)) enclose the Thioredoxin domain. Residues Cys-43 and Cys-46 each act as nucleophile in the active site. Cys-43 and Cys-46 are oxidised to a cystine.

This sequence belongs to the thioredoxin family. Predominantly expressed in liver, brain and muscle. Also expressed in kidney, intestine, skin, stomach, gill and head kidney.

The protein resides in the cytoplasm. Disulfide reductase. May participate in various redox reactions through the reversible oxidation of its active center dithiol to a disulfide and catalyze dithiol-disulfide exchange reactions. Has peroxidase activity and may contribute to the elimination of cellular hydrogen peroxide. May function as an antioxidant involved in response to viral infection. The sequence is that of Thioredoxin domain-containing protein 17 from Epinephelus coioides (Orange-spotted grouper).